We begin with the raw amino-acid sequence, 395 residues long: MGIKQLYQVISENAPDAIKAGDIKNHFGRKVAIDASMSIYSFLIAVRSEGQQLMSDTGETTSHLMGMFYRTLRMVDNGIKPLYVFDGAPPKLKSGELAKRTARKTEATEAHEEAKETGTAEDVEKFSRRTVRVTREHNAECKKLLKLMGIPYIDAPTEAEAQCAVLARAGKVYAAASEDMDTLCFEAPILLRHLTFSEQRKEPIQEIHLSRALEGLDMDRAKFIDLCILLGCDYLEPIPKVGPNTALKLIRDHGSLEKVVEYIQNDPKKKYVIPEDWPYQDARELFLHPDVRDANDPECDFKWEAPDIEGLVEFLVKDKGFNEDRVRNGAARLQKNLKTAQQSRLEGFFKPVARSDEEKATLKRKHDEKLQEQKKRKKEEAKAKKEAKARPRGAG.

The tract at residues 1-104 (MGIKQLYQVI…GELAKRTARK (104 aa)) is N-domain. Position 34 (D34) interacts with Mg(2+). 2 residues coordinate DNA: R47 and R70. D86 contacts Mg(2+). The tract at residues 96 to 121 (ELAKRTARKTEATEAHEEAKETGTAE) is disordered. Residues 122–253 (DVEKFSRRTV…NTALKLIRDH (132 aa)) are I-domain. The Mg(2+) site is built by E158, E160, D179, and D181. DNA is bound at residue E158. DNA-binding residues include G231 and D233. D233 provides a ligand contact to Mg(2+). Residues 341 to 349 (QQSRLEGFF) are interaction with PCNA. The tract at residues 348-395 (FFKPVARSDEEKATLKRKHDEKLQEQKKRKKEEAKAKKEAKARPRGAG) is disordered. The span at 353–389 (ARSDEEKATLKRKHDEKLQEQKKRKKEEAKAKKEAKA) shows a compositional bias: basic and acidic residues.

It belongs to the XPG/RAD2 endonuclease family. FEN1 subfamily. In terms of assembly, interacts with PCNA. Three molecules of fen1 bind to one PCNA trimer with each molecule binding to one PCNA monomer. PCNA stimulates the nuclease activity without altering cleavage specificity. Requires Mg(2+) as cofactor. In terms of processing, phosphorylated. Phosphorylation upon DNA damage induces relocalization to the nuclear plasma.

Its subcellular location is the nucleus. The protein resides in the nucleolus. It is found in the nucleoplasm. It localises to the mitochondrion. Structure-specific nuclease with 5'-flap endonuclease and 5'-3' exonuclease activities involved in DNA replication and repair. During DNA replication, cleaves the 5'-overhanging flap structure that is generated by displacement synthesis when DNA polymerase encounters the 5'-end of a downstream Okazaki fragment. It enters the flap from the 5'-end and then tracks to cleave the flap base, leaving a nick for ligation. Also involved in the long patch base excision repair (LP-BER) pathway, by cleaving within the apurinic/apyrimidinic (AP) site-terminated flap. Acts as a genome stabilization factor that prevents flaps from equilibrating into structures that lead to duplications and deletions. Also possesses 5'-3' exonuclease activity on nicked or gapped double-stranded DNA, and exhibits RNase H activity. Also involved in replication and repair of rDNA and in repairing mitochondrial DNA. The protein is Flap endonuclease 1 (fen1) of Aspergillus terreus (strain NIH 2624 / FGSC A1156).